Consider the following 278-residue polypeptide: Putative non-heme haloperoxidase (278 aa).

Residues 24–240 form the AB hydrolase-1 domain; that stretch reads PLVFLHGLSV…STAKITNASF (217 aa). Active-site residues include S97 and D221.

The protein belongs to the AB hydrolase superfamily.

The protein is Putative non-heme haloperoxidase (59.2) of Mycobacterium (Mycobacteriophage D29).